The sequence spans 301 residues: GTP cyclohydrolase FolE2 (301 aa).

It belongs to the GTP cyclohydrolase IV family.

It catalyses the reaction GTP + H2O = 7,8-dihydroneopterin 3'-triphosphate + formate + H(+). It participates in cofactor biosynthesis; 7,8-dihydroneopterin triphosphate biosynthesis; 7,8-dihydroneopterin triphosphate from GTP: step 1/1. In terms of biological role, converts GTP to 7,8-dihydroneopterin triphosphate. The chain is GTP cyclohydrolase FolE2 from Exiguobacterium sibiricum (strain DSM 17290 / CCUG 55495 / CIP 109462 / JCM 13490 / 255-15).